Consider the following 142-residue polypeptide: MAKGKYAANILKQTRKDARWKDTYYGRRVLGLNVKADPLGGAPQGRGIVLEKVGVEAKQPNSAIRKCVRIQLIKNGRQVTAFCPGDGAVNFIDEHDEVTVERIGGRMGGAMGDIPGVRFKVIAVNNVSLNQLVIGRLEKPRR.

Belongs to the universal ribosomal protein uS12 family. In terms of assembly, part of the 30S ribosomal subunit.

In terms of biological role, with S4 and S5 plays an important role in translational accuracy. Located at the interface of the 30S and 50S subunits. The protein is Small ribosomal subunit protein uS12 of Methanosarcina mazei (strain ATCC BAA-159 / DSM 3647 / Goe1 / Go1 / JCM 11833 / OCM 88) (Methanosarcina frisia).